A 66-amino-acid chain; its full sequence is Large ribosomal subunit protein bL33c (66 aa).

It belongs to the bacterial ribosomal protein bL33 family.

It is found in the plastid. Its subcellular location is the chloroplast. The chain is Large ribosomal subunit protein bL33c from Physcomitrium patens (Spreading-leaved earth moss).